The following is a 331-amino-acid chain: Phenylalanine--tRNA ligase alpha subunit (331 aa).

E256 serves as a coordination point for Mg(2+).

Belongs to the class-II aminoacyl-tRNA synthetase family. Phe-tRNA synthetase alpha subunit type 1 subfamily. In terms of assembly, tetramer of two alpha and two beta subunits. The cofactor is Mg(2+).

The protein resides in the cytoplasm. The catalysed reaction is tRNA(Phe) + L-phenylalanine + ATP = L-phenylalanyl-tRNA(Phe) + AMP + diphosphate + H(+). The protein is Phenylalanine--tRNA ligase alpha subunit of Colwellia psychrerythraea (strain 34H / ATCC BAA-681) (Vibrio psychroerythus).